We begin with the raw amino-acid sequence, 318 residues long: B3 domain-containing protein At1g05930 (318 aa).

Positions 201–293 form a DNA-binding region, TF-B3; sequence FNRLISNDFL…VLCFAMRQWR (93 aa).

The protein localises to the nucleus. The polypeptide is B3 domain-containing protein At1g05930 (Arabidopsis thaliana (Mouse-ear cress)).